The following is a 130-amino-acid chain: MEWKIVVPLFAVAFTVANAGLIGGPMDANMNDQGTRDALQFAVVEHNKKTNDMFVRQVAKVVNAQKQVVSGMKYIFTVQMGRTPCRKGGVEKVCSVHKDPQMAVPYKCTFEVWSRPWMSDIQMVKNQCES.

An N-terminal signal peptide occupies residues 1–19 (MEWKIVVPLFAVAFTVANA). A Secondary area of contact motif is present at residues 67 to 71 (QVVSG). Disulfide bonds link cysteine 85–cysteine 94 and cysteine 108–cysteine 128.

The protein belongs to the cystatin family.

It localises to the secreted. In terms of biological role, cysteine proteinase inhibitor. The chain is Cystatin from Oncorhynchus mykiss (Rainbow trout).